Consider the following 97-residue polypeptide: MDKSKRLFLKSKRSFRRRLPPIQSGDRIDYRNISLISRFISQQGKILSRRVNRLTLKQQRLITIAIKQARILSLLPFRPKAQRFKKAQRFKRSQSTV.

This sequence belongs to the bacterial ribosomal protein bS18 family. As to quaternary structure, part of the 30S ribosomal subunit.

It localises to the plastid. The protein resides in the chloroplast. The chain is Small ribosomal subunit protein bS18c from Oenothera glazioviana (Large-flowered evening primrose).